A 251-amino-acid polypeptide reads, in one-letter code: MALRLFRKSSFFAKISMEGPKGSSPFAFYAFYQLYSHLNPGKSSSLSLEDIRRRLYPDFKIDYNEKTSLFITWKKKSNKHHTIDTNEENYILRGCIGTFAKMPIAHGIEKYSLIAALEDRRFSPIQKRELVDLKCSCNILGNFKTIFRGGGNPNGDIFDWELGKHGIELYFKHPKTGTTCSATFLPDVMPEQHWNKEDTFANLIEKAGYWGNISEVMDNFETYFIEVIRYEGKKSSITYEEFNKQLKDIEA.

In terms of domain architecture, AMMECR1 spans 21 to 246 (KGSSPFAFYA…ITYEEFNKQL (226 aa)).

This is an uncharacterized protein from Saccharomyces cerevisiae (strain ATCC 204508 / S288c) (Baker's yeast).